Consider the following 314-residue polypeptide: MTASLTTKFLNNTYENPFMNASGVHCMTTQELDELANSKAGAFITKSATTLEREGNPKPRYISVPLGSINSMGLPNEGIDYYLSYVLNRQKEHPDAPAIFFSVAGMSIDENLNLLRKIQDSEFNGITELNLSCPNVPGKPQVAYDFDLTKETLDRVFAFFKKPLGIKLPPYFDFAHFDIMAKILNEFPLAYVNSINSIGNGLFIDVEKESVVVKPKNGFGGIGGEYVKPTALANVRAFYTRLRPEIKVIGTGGIKSGKDAFEHLLCGASMLQIGTELQKEGVKIFERIEKELKDIMEAKGYTSIDQFRGMLNSI.

Substrate-binding positions include K46, N70–L74, and N130. An FMN-binding site is contributed by K46–S47. FMN is bound at residue N130. Residues S132 and C133 each act as nucleophile in the active site. The FMN site is built by K167 and I195. N196–S197 contacts substrate. Residues G224, G252–G253, and G274–T275 each bind FMN.

This sequence belongs to the dihydroorotate dehydrogenase family. Type 1 subfamily. As to quaternary structure, homodimer. The cofactor is FMN.

It localises to the cytoplasm. The enzyme catalyses (S)-dihydroorotate + fumarate = orotate + succinate. The protein operates within pyrimidine metabolism; UMP biosynthesis via de novo pathway. In terms of biological role, catalyzes the conversion of dihydroorotate to orotate with fumarate as the electron acceptor. The chain is Dihydroorotate dehydrogenase (fumarate) (URA1) from Saccharomyces paradoxus (Yeast).